Reading from the N-terminus, the 614-residue chain is MKQSSVVDLLLLLLAIALLATPAFSDLVLSKVERRIDVTSQIARVTKTLKVVNSGSESVSEFALTFPKFLGNNLAYLSVAPSEGKGKSKRTLVNLSVREADQKGLPDSISVYSVALPKPLSKGDTLTLEVVAAFTNVLQPFPEKITQGEIHLVMLQESAQYLSPYAVESQSLSIKLPNARIESYTKFENTKLQGSELKYGPYKNLQSYSYSPIVVHFESKAAFAVAEKLVREIEVSHWGNVQVTENYNVVHRGAQLKGEFSRLDFQARPNPRGASAFRHLLARLPPRAHSIYYRDDIGNISTSEMKSDSKKTELLIEPRFPLFGGWKTFFTIGYGLPLTDFLFASEGKRFLNISFGSPILDLVTEKLIVQVVLPEGSKDISVTTPFAVKQSQEIKYSHLDIAGRPVVVLEKNNVVPDHNQHIQVYYKFSNINLLSEPLMLISGFFILFITCIIYTRADISISKSSPSYLAKLQWDEVLATLQEVQSIVQKCLATHDKLEASLRDLSRTGDIQTCKAARKSTDSLLKDLSKELKPLLGFLQSFPSASHISPKVEELVVKEKELQEKLMAKHTTVVEGYEKKSSGRDIENRIASQQQKIIALRQEIEDLLEFIDEI.

The first 25 residues, 1–25 (MKQSSVVDLLLLLLAIALLATPAFS), serve as a signal peptide directing secretion. The Lumenal segment spans residues 26–432 (DLVLSKVERR…QVYYKFSNIN (407 aa)). 2 N-linked (GlcNAc...) asparagine glycosylation sites follow: asparagine 94 and asparagine 299. Lysine 311 participates in a covalent cross-link: Glycyl lysine isopeptide (Lys-Gly) (interchain with G-Cter in ubiquitin). Asparagine 352 carries N-linked (GlcNAc...) asparagine glycosylation. A helical membrane pass occupies residues 433 to 453 (LLSEPLMLISGFFILFITCII). The Cytoplasmic portion of the chain corresponds to 454 to 614 (YTRADISISK…EDLLEFIDEI (161 aa)).

The protein belongs to the OST1 family. As to quaternary structure, component of the oligosaccharyltransferase (OST) complex.

It is found in the endoplasmic reticulum membrane. It participates in protein modification; protein glycosylation. In terms of biological role, subunit of the oligosaccharyl transferase (OST) complex that catalyzes the initial transfer of a defined glycan (Glc(3)Man(9)GlcNAc(2) in eukaryotes) from the lipid carrier dolichol-pyrophosphate to an asparagine residue within an Asn-X-Ser/Thr consensus motif in nascent polypeptide chains, the first step in protein N-glycosylation. N-glycosylation occurs cotranslationally and the complex associates with the Sec61 complex at the channel-forming translocon complex that mediates protein translocation across the endoplasmic reticulum (ER). All subunits are required for a maximal enzyme activity. The sequence is that of Dolichyl-diphosphooligosaccharide--protein glycosyltransferase subunit 1A (OST1A) from Arabidopsis thaliana (Mouse-ear cress).